The following is a 285-amino-acid chain: HTH-type transcriptional regulator MurR (285 aa).

Residues 1 to 77 enclose the HTH rpiR-type domain; it reads MLYLTKISNA…MALIGEYSAS (77 aa). Residues 37-56 constitute a DNA-binding region (H-T-H motif); it reads SRQMAKQLGISQSSIVKFAQ. The region spanning 128-268 is the SIS domain; the sequence is IIDVISKAQF…FVGLVQLNDV (141 aa).

As to quaternary structure, homotetramer.

It functions in the pathway amino-sugar metabolism; N-acetylmuramate degradation [regulation]. Represses the expression of the murPQ operon involved in the uptake and degradation of N-acetylmuramic acid (MurNAc). Binds to two adjacent inverted repeats within the operator region. MurNAc 6-phosphate, the substrate of MurQ, is the specific inducer that weakens binding of MurR to the operator. This is HTH-type transcriptional regulator MurR from Escherichia coli (strain B / BL21-DE3).